We begin with the raw amino-acid sequence, 230 residues long: MSERAPVVTVDGPSGAGKGTISQLLAERLGYKLLDSGAIYRVLALAAIHHNVELDNEEALTLLAAHLDVQFVTGNESKGIKVVLEGEDVSITIRSQECSNAASKVAAFPRVREALLRRQRAFAEAPGLIADGRDMGTIVFPTTPAKLYLTASAEERAQRRYNQLQDKGFDVNIDQLLSEIKERDDRDMNRSVAPLVPAEDALIIDTTNINIEDVLDLALTHIHQKLQVPA.

12–20 lines the ATP pocket; that stretch reads GPSGAGKGT.

Belongs to the cytidylate kinase family. Type 1 subfamily.

The protein localises to the cytoplasm. It catalyses the reaction CMP + ATP = CDP + ADP. The catalysed reaction is dCMP + ATP = dCDP + ADP. In Shewanella pealeana (strain ATCC 700345 / ANG-SQ1), this protein is Cytidylate kinase.